The following is a 338-amino-acid chain: Heat-inducible transcription repressor HrcA (338 aa).

The protein belongs to the HrcA family.

In terms of biological role, negative regulator of class I heat shock genes (grpE-dnaK-dnaJ and groELS operons). Prevents heat-shock induction of these operons. The chain is Heat-inducible transcription repressor HrcA from Thermotoga sp. (strain RQ2).